The primary structure comprises 206 residues: Guanylate kinase (206 aa).

Residues 7–185 (GLLIVISGPS…AVEKIRAIII (179 aa)) form the Guanylate kinase-like domain. 14–21 (GPSGAGKG) serves as a coordination point for ATP.

This sequence belongs to the guanylate kinase family.

It is found in the cytoplasm. The enzyme catalyses GMP + ATP = GDP + ADP. Essential for recycling GMP and indirectly, cGMP. The chain is Guanylate kinase from Caldanaerobacter subterraneus subsp. tengcongensis (strain DSM 15242 / JCM 11007 / NBRC 100824 / MB4) (Thermoanaerobacter tengcongensis).